Reading from the N-terminus, the 95-residue chain is Fluoride-specific ion channel FluC 1 (95 aa).

3 consecutive transmembrane segments (helical) span residues 23 to 43 (LIDA…LMGW), 49 to 69 (LWGT…LLMF), and 70 to 90 (DGAY…WLLG). Glycine 56 and threonine 59 together coordinate Na(+).

It belongs to the fluoride channel Fluc/FEX (TC 1.A.43) family.

The protein resides in the cell membrane. It carries out the reaction fluoride(in) = fluoride(out). With respect to regulation, na(+) is not transported, but it plays an essential structural role and its presence is essential for fluoride channel function. Fluoride-specific ion channel. Important for reducing fluoride concentration in the cell, thus reducing its toxicity. The sequence is that of Fluoride-specific ion channel FluC 1 from Corynebacterium diphtheriae (strain ATCC 700971 / NCTC 13129 / Biotype gravis).